The chain runs to 152 residues: Transcriptional regulator MraZ (152 aa).

SpoVT-AbrB domains are found at residues 5-52 (ATLV…PLPE) and 81-124 (ASEC…DETT).

This sequence belongs to the MraZ family. In terms of assembly, forms oligomers.

The protein resides in the cytoplasm. It localises to the nucleoid. In terms of biological role, negatively regulates its own expression and that of the subsequent genes in the proximal part of the division and cell wall (dcw) gene cluster. Acts by binding directly to DNA. May also regulate the expression of genes outside the dcw cluster. This chain is Transcriptional regulator MraZ, found in Klebsiella pneumoniae (strain 342).